We begin with the raw amino-acid sequence, 526 residues long: Tyrosine-protein kinase transforming protein Src (526 aa).

Positions 1 to 15 are enriched in basic residues; sequence MGSSKSKPKGPSQRR. The tract at residues 1–59 is disordered; the sequence is MGSSKSKPKGPSQRRRSLEPPDSTHHGGFPASQTPNKTAAPDTHRTPSRSFGTVATEPK. Residue Gly-2 is the site of N-myristoyl glycine; by host attachment. Residues 16-25 are compositionally biased toward basic and acidic residues; it reads RSLEPPDSTH. An SH3 domain is found at 81–142; sequence GGVTTFVALY…PSNYVAPSDS (62 aa). The 98-residue stretch at 148 to 245 folds into the SH2 domain; sequence WYFGKITRRE…GLCHRLTNVC (98 aa). Residues 267-517 enclose the Protein kinase domain; that stretch reads LRLEVKLGQG…TFEYLQAQLL (251 aa). Residues 273–281 and Lys-295 contribute to the ATP site; that span reads LGQGCFGEV. Residue Asp-386 is the Proton acceptor of the active site. At Tyr-416 the chain carries Phosphotyrosine; by autocatalysis.

This sequence belongs to the protein kinase superfamily. Tyr protein kinase family. SRC subfamily. As to quaternary structure, homodimer. In terms of processing, the phosphorylated form is termed pp60v-src.

It catalyses the reaction L-tyrosyl-[protein] + ATP = O-phospho-L-tyrosyl-[protein] + ADP + H(+). In terms of biological role, this phosphoprotein, required for both the initiation and the maintenance of neoplastic transformation, is a protein kinase that catalyzes the phosphorylation of tyrosine residues in vitro. In Rous sarcoma virus subgroup E (strain Schmidt-Ruppin) (RSV-SR-E), this protein is Tyrosine-protein kinase transforming protein Src (V-SRC).